We begin with the raw amino-acid sequence, 76 residues long: Exodeoxyribonuclease 7 small subunit (76 aa).

The protein belongs to the XseB family. In terms of assembly, heterooligomer composed of large and small subunits.

It is found in the cytoplasm. It catalyses the reaction Exonucleolytic cleavage in either 5'- to 3'- or 3'- to 5'-direction to yield nucleoside 5'-phosphates.. In terms of biological role, bidirectionally degrades single-stranded DNA into large acid-insoluble oligonucleotides, which are then degraded further into small acid-soluble oligonucleotides. This is Exodeoxyribonuclease 7 small subunit from Latilactobacillus sakei subsp. sakei (strain 23K) (Lactobacillus sakei subsp. sakei).